Reading from the N-terminus, the 65-residue chain is Large ribosomal subunit protein bL33 (65 aa).

The disordered stretch occupies residues 19 to 40 (TVPSSKKRSAGVSRYTTEKNRR).

Belongs to the bacterial ribosomal protein bL33 family.

This is Large ribosomal subunit protein bL33 from Prochlorococcus marinus (strain NATL2A).